The sequence spans 297 residues: Phosphatidylglycerol--prolipoprotein diacylglyceryl transferase (297 aa).

4 consecutive transmembrane segments (helical) span residues 20 to 40 (FITIRWYGLLISVSVLIGLFI), 57 to 77 (EILPSLIIFSIIGARAYYVIF), 107 to 127 (WEGGIAIHGGLIGGLISIIFF), and 133 to 153 (IHLKTFIDILIPSIILGQSIG). Arg-154 serves as a coordination point for a 1,2-diacyl-sn-glycero-3-phospho-(1'-sn-glycerol). 3 consecutive transmembrane segments (helical) span residues 193–213 (PTFLYESLWNLLVFIFLILIF), 225–245 (GFISCLYLICYSFGRFWIEGL), and 266–286 (AQFISIFLFSSGLIGIFFLRL).

The protein belongs to the Lgt family.

It localises to the cell inner membrane. The enzyme catalyses L-cysteinyl-[prolipoprotein] + a 1,2-diacyl-sn-glycero-3-phospho-(1'-sn-glycerol) = an S-1,2-diacyl-sn-glyceryl-L-cysteinyl-[prolipoprotein] + sn-glycerol 1-phosphate + H(+). Its pathway is protein modification; lipoprotein biosynthesis (diacylglyceryl transfer). Catalyzes the transfer of the diacylglyceryl group from phosphatidylglycerol to the sulfhydryl group of the N-terminal cysteine of a prolipoprotein, the first step in the formation of mature lipoproteins. The polypeptide is Phosphatidylglycerol--prolipoprotein diacylglyceryl transferase (Prochlorococcus marinus (strain MIT 9301)).